A 394-amino-acid chain; its full sequence is Outer membrane protein S1 (394 aa).

Residues Met-1 to Ala-21 form the signal peptide. A disordered region spans residues Ser-222–Arg-242.

This sequence belongs to the Gram-negative porin family. Homotrimer.

It is found in the cell outer membrane. Forms pores that allow passive diffusion of small molecules across the outer membrane. This is Outer membrane protein S1 (ompS1) from Salmonella typhi.